Reading from the N-terminus, the 173-residue chain is Crossover junction endodeoxyribonuclease RuvC (173 aa).

Active-site residues include Asp8, Glu67, and Asp139. Residues Asp8, Glu67, and Asp139 each coordinate Mg(2+).

Belongs to the RuvC family. In terms of assembly, homodimer which binds Holliday junction (HJ) DNA. The HJ becomes 2-fold symmetrical on binding to RuvC with unstacked arms; it has a different conformation from HJ DNA in complex with RuvA. In the full resolvosome a probable DNA-RuvA(4)-RuvB(12)-RuvC(2) complex forms which resolves the HJ. The cofactor is Mg(2+).

The protein localises to the cytoplasm. It catalyses the reaction Endonucleolytic cleavage at a junction such as a reciprocal single-stranded crossover between two homologous DNA duplexes (Holliday junction).. Its function is as follows. The RuvA-RuvB-RuvC complex processes Holliday junction (HJ) DNA during genetic recombination and DNA repair. Endonuclease that resolves HJ intermediates. Cleaves cruciform DNA by making single-stranded nicks across the HJ at symmetrical positions within the homologous arms, yielding a 5'-phosphate and a 3'-hydroxyl group; requires a central core of homology in the junction. The consensus cleavage sequence is 5'-(A/T)TT(C/G)-3'. Cleavage occurs on the 3'-side of the TT dinucleotide at the point of strand exchange. HJ branch migration catalyzed by RuvA-RuvB allows RuvC to scan DNA until it finds its consensus sequence, where it cleaves and resolves the cruciform DNA. This chain is Crossover junction endodeoxyribonuclease RuvC, found in Vibrio vulnificus (strain CMCP6).